Consider the following 259-residue polypeptide: MSNTDNSDKNTKPTGYRPPQTDFNTEFGNNLDYPRLGSVSFRRGTLTDNQESLWDANWPILGKDLTDAEDQRIDVAEWFGRCGHKTILEIGSGTGTSTAAMAPLEADTNIIAVELYKPGLAKLLGAVVRGDISNVRMIRGDGVEVLTRMLPEESLDGVRIYFPDPWPKARHHKRRIIQSGVLNLIASRLKPGGVLHVATDHADYAEWITELVNVEPQLEFMGWPWDECPQLTDRQVITKFEGKGLDKDHTITEFLWRRK.

Residues 1–11 (MSNTDNSDKNT) are compositionally biased toward basic and acidic residues. The disordered stretch occupies residues 1-29 (MSNTDNSDKNTKPTGYRPPQTDFNTEFGN). The S-adenosyl-L-methionine site is built by Glu-89, Glu-114, Asp-141, and Asp-164. Residue Asp-164 is part of the active site. Substrate-binding positions include Lys-168, Asp-200, and 238-241 (TKFE).

Belongs to the class I-like SAM-binding methyltransferase superfamily. TrmB family.

It catalyses the reaction guanosine(46) in tRNA + S-adenosyl-L-methionine = N(7)-methylguanosine(46) in tRNA + S-adenosyl-L-homocysteine. It participates in tRNA modification; N(7)-methylguanine-tRNA biosynthesis. Catalyzes the formation of N(7)-methylguanine at position 46 (m7G46) in tRNA. In Corynebacterium diphtheriae (strain ATCC 700971 / NCTC 13129 / Biotype gravis), this protein is tRNA (guanine-N(7)-)-methyltransferase.